The sequence spans 859 residues: DNA mismatch repair protein MutS (859 aa).

615 to 622 (GPNMGGKS) contributes to the ATP binding site.

Belongs to the DNA mismatch repair MutS family.

This protein is involved in the repair of mismatches in DNA. It is possible that it carries out the mismatch recognition step. This protein has a weak ATPase activity. The polypeptide is DNA mismatch repair protein MutS (Chromohalobacter salexigens (strain ATCC BAA-138 / DSM 3043 / CIP 106854 / NCIMB 13768 / 1H11)).